A 226-amino-acid polypeptide reads, in one-letter code: Orotidine 5'-phosphate decarboxylase (226 aa).

Residues Asp8, Lys30, 58–67, Thr117, Arg177, Gln186, Gly206, and Arg207 each bind substrate; that span reads DLKLYDIPNT. The active-site Proton donor is Lys60.

This sequence belongs to the OMP decarboxylase family. Type 1 subfamily. In terms of assembly, homodimer.

The enzyme catalyses orotidine 5'-phosphate + H(+) = UMP + CO2. It participates in pyrimidine metabolism; UMP biosynthesis via de novo pathway; UMP from orotate: step 2/2. Functionally, catalyzes the decarboxylation of orotidine 5'-monophosphate (OMP) to uridine 5'-monophosphate (UMP). This Campylobacter concisus (strain 13826) protein is Orotidine 5'-phosphate decarboxylase.